We begin with the raw amino-acid sequence, 361 residues long: Mycothiol acetyltransferase (361 aa).

2 N-acetyltransferase domains span residues 25 to 173 (PRVR…LPGS) and 195 to 361 (VTVL…AWKF). A 1D-myo-inositol 2-(L-cysteinylamino)-2-deoxy-alpha-D-glucopyranoside-binding site is contributed by Glu59. 98–100 (LAV) is a binding site for acetyl-CoA. Residues Glu229, Lys280, and Glu295 each contribute to the 1D-myo-inositol 2-(L-cysteinylamino)-2-deoxy-alpha-D-glucopyranoside site. Acetyl-CoA is bound by residues 299 to 301 (IGL) and 306 to 312 (QGRGLGR). Tyr333 is a binding site for 1D-myo-inositol 2-(L-cysteinylamino)-2-deoxy-alpha-D-glucopyranoside. 338–343 (NAPAVH) provides a ligand contact to acetyl-CoA.

The protein belongs to the acetyltransferase family. MshD subfamily. As to quaternary structure, monomer.

The catalysed reaction is 1D-myo-inositol 2-(L-cysteinylamino)-2-deoxy-alpha-D-glucopyranoside + acetyl-CoA = mycothiol + CoA + H(+). Catalyzes the transfer of acetyl from acetyl-CoA to desacetylmycothiol (Cys-GlcN-Ins) to form mycothiol. The sequence is that of Mycothiol acetyltransferase from Corynebacterium kroppenstedtii (strain DSM 44385 / JCM 11950 / CIP 105744 / CCUG 35717).